The following is a 369-amino-acid chain: WAT1-related protein At3g53210 (369 aa).

Helical transmembrane passes span 12–31 (IAMV…MRYA), 39–59 (LVFP…SAYF), 72–92 (FLIQ…GFYI), 103–123 (ASAT…LLGI), 133–153 (GIAK…ITLY), 182–202 (WTLG…WIVL), 214–234 (FSFV…ISAY), 252–272 (ALLY…IYVV), 278–298 (LFVS…ATLA), and 303–323 (FYLG…LVVM). EamA domains follow at residues 24–150 (NHVI…SLVI) and 194–323 (LCWS…LVVM). Positions 348–369 (GDEEDYHNNKPRSPISQPLISS) are disordered.

This sequence belongs to the drug/metabolite transporter (DMT) superfamily. Plant drug/metabolite exporter (P-DME) (TC 2.A.7.4) family.

The protein resides in the membrane. The sequence is that of WAT1-related protein At3g53210 from Arabidopsis thaliana (Mouse-ear cress).